The primary structure comprises 226 residues: Flagellar L-ring protein (226 aa).

An N-terminal signal peptide occupies residues 1–15; the sequence is MKRLAVSILCLALAG. C16 is lipidated: N-palmitoyl cysteine. C16 is lipidated: S-diacylglycerol cysteine.

This sequence belongs to the FlgH family. As to quaternary structure, the basal body constitutes a major portion of the flagellar organelle and consists of four rings (L,P,S, and M) mounted on a central rod.

Its subcellular location is the cell outer membrane. It is found in the bacterial flagellum basal body. Assembles around the rod to form the L-ring and probably protects the motor/basal body from shearing forces during rotation. This Geobacter metallireducens (strain ATCC 53774 / DSM 7210 / GS-15) protein is Flagellar L-ring protein.